We begin with the raw amino-acid sequence, 325 residues long: Protease HtpX homolog (325 aa).

Residues 20 to 40 (IGYLLGGGGGMMIALVIAVAM) traverse the membrane as a helical segment. Zn(2+) is bound at residue H130. The active site involves E131. H134 serves as a coordination point for Zn(2+). The next 2 membrane-spanning stretches (helical) occupy residues 145-165 (IVATLAGAISMLGNFAFFLGG) and 173-193 (VMGVVGTLLAMIVAPFGAMIV). E202 is a Zn(2+) binding site. The segment at 288 to 325 (AMTARAAAPSQNSGPWGQRSDNAGGNSNGGSRYRGPWS) is disordered. A compositionally biased stretch (low complexity) spans 306-325 (RSDNAGGNSNGGSRYRGPWS).

The protein belongs to the peptidase M48B family. Zn(2+) is required as a cofactor.

The protein localises to the cell inner membrane. In Brucella abortus (strain S19), this protein is Protease HtpX homolog.